A 93-amino-acid polypeptide reads, in one-letter code: Cell division topological specificity factor (93 aa).

It belongs to the MinE family.

Prevents the cell division inhibition by proteins MinC and MinD at internal division sites while permitting inhibition at polar sites. This ensures cell division at the proper site by restricting the formation of a division septum at the midpoint of the long axis of the cell. This chain is Cell division topological specificity factor, found in Syntrophus aciditrophicus (strain SB).